The following is a 339-amino-acid chain: Purple acid phosphatase 4 (339 aa).

A signal peptide spans 1–31 (MSSKFDIGSLSIVMTLLICFLLLSLAPKLEA). A Fe cation-binding site is contributed by D53. A glycan (N-linked (GlcNAc...) asparagine) is linked at N61. Fe cation is bound by residues D86 and Y89. D86 lines the Zn(2+) pocket. Zn(2+) is bound by residues N124 and H218. The active-site Proton donor is the H227. Position 253 (H253) interacts with Zn(2+). 253 to 255 (HDH) contributes to the substrate binding site. H255 provides a ligand contact to Fe cation. Residue N284 is glycosylated (N-linked (GlcNAc...) asparagine).

It belongs to the metallophosphoesterase superfamily. Purple acid phosphatase family. As to quaternary structure, homodimer. It depends on Fe cation as a cofactor. The cofactor is Zn(2+). As to expression, expressed in roots, stems, leaves, flowers and siliques.

Its subcellular location is the secreted. It carries out the reaction a phosphate monoester + H2O = an alcohol + phosphate. The sequence is that of Purple acid phosphatase 4 (PAP4) from Arabidopsis thaliana (Mouse-ear cress).